The primary structure comprises 219 residues: Guanylate kinase (219 aa).

Positions 15–194 (GLMFVLSSPS…AFESVKAILR (180 aa)) constitute a Guanylate kinase-like domain. Residue 22–29 (SPSGAGKT) coordinates ATP.

The protein belongs to the guanylate kinase family.

Its subcellular location is the cytoplasm. It carries out the reaction GMP + ATP = GDP + ADP. Its function is as follows. Essential for recycling GMP and indirectly, cGMP. This chain is Guanylate kinase, found in Rhodopseudomonas palustris (strain BisB5).